The sequence spans 453 residues: Validoxylamine A glucosyltransferase (453 aa).

The protein belongs to the glycosyltransferase 2 family. Requires Mn(2+) as cofactor.

It catalyses the reaction validoxylamine A + UDP-alpha-D-glucose = validamycin A + UDP + H(+). Involved in the biosynthesis of the antifungal agent validamycin A. Catalyzes the final attachment of glucose from UDP-alpha-D-glucose to validoxylamine A to yield validamycin A. The protein is Validoxylamine A glucosyltransferase of Streptomyces hygroscopicus subsp. limoneus.